The sequence spans 763 residues: Dual specificity tyrosine-phosphorylation-regulated kinase 1A (763 aa).

The residue at position 14 (serine 14) is a Phosphoserine. A disordered region spans residues 32–57; that stretch reads GQMPHSHQYSDRRQPNISDQQVSALS. Over residues 46 to 57 the composition is skewed to polar residues; the sequence is PNISDQQVSALS. Position 111 is a phosphotyrosine; by autocatalysis (tyrosine 111). The tract at residues 115-136 is disordered; the sequence is KKRRHQQGQGDDSSHKKERKVY. The Bipartite nuclear localization signal signature appears at 117-134; sequence RRHQQGQGDDSSHKKERK. The residue at position 140 (tyrosine 140) is a Phosphotyrosine; by autocatalysis. Tyrosine 145 bears the Phosphotyrosine mark. Residue tyrosine 159 is modified to Phosphotyrosine; by autocatalysis. The region spanning 159–479 is the Protein kinase domain; the sequence is YEIDSLIGKG…PYYALQHSFF (321 aa). 165 to 173 contributes to the ATP binding site; it reads IGKGSFGQV. A Phosphotyrosine; by autocatalysis modification is found at tyrosine 177. Lysine 188 provides a ligand contact to ATP. A Phosphotyrosine; by autocatalysis modification is found at tyrosine 219. 238–241 is an ATP binding site; that stretch reads FEML. Aspartate 287 serves as the catalytic Proton acceptor. Serine 310 carries the post-translational modification Phosphoserine; by autocatalysis. Residues tyrosine 319 and tyrosine 321 each carry the phosphotyrosine; by autocatalysis modification. Threonine 402 is modified (phosphothreonine; by autocatalysis). The interval 408 to 442 is disordered; sequence TKDGKREYKPPGTRKLHNILGVETGGPGGRRAGES. The residue at position 449 (tyrosine 449) is a Phosphotyrosine; by autocatalysis. Residues 485–501 show a composition bias toward polar residues; it reads EGTNTSNSVSTSPAMEQ. Disordered stretches follow at residues 485–540, 596–679, and 744–763; these read EGTN…HSGG, NALH…GNQA, and DREESPMTGVCVQQSPVASS. Residues 502-525 are compositionally biased toward low complexity; the sequence is SQSSGTTSSTSSSSGGSSGTSNSG. Residues serine 529 and serine 538 each carry the phosphoserine modification. The segment at 595–625 is histidine-rich domain (HRD); sequence QNALHHHHGNSSHHHHHHHHHHHHHGQQALG. The segment covering 598–620 has biased composition (basic residues); sequence LHHHHGNSSHHHHHHHHHHHHHG. A compositionally biased stretch (polar residues) spans 634 to 645; the sequence is NSPTNSSSTQDS. Residues 654 to 672 are compositionally biased toward low complexity; the sequence is SMTSLSSSTTSSSTSSSST. Phosphoserine is present on residues serine 748 and serine 758. The segment covering 754–763 has biased composition (polar residues); that stretch reads CVQQSPVASS.

This sequence belongs to the protein kinase superfamily. CMGC Ser/Thr protein kinase family. MNB/DYRK subfamily. In terms of assembly, interacts with RAD54L2/ARIP4. Interacts with CRY2. Interacts with RANBP9. Interacts with WDR68. Interacts with SIRT1. (Microbial infection) Interacts with human adenovirus 5 E1A protein. Autophosphorylated on numerous tyrosine residues. Can also autophosphorylate on serine and threonine residues (in vitro). Ubiquitous. Highest levels in skeletal muscle, testis, fetal lung and fetal kidney.

The protein resides in the nucleus. Its subcellular location is the nucleus speckle. It carries out the reaction L-seryl-[protein] + ATP = O-phospho-L-seryl-[protein] + ADP + H(+). The catalysed reaction is L-threonyl-[protein] + ATP = O-phospho-L-threonyl-[protein] + ADP + H(+). It catalyses the reaction L-tyrosyl-[protein] + ATP = O-phospho-L-tyrosyl-[protein] + ADP + H(+). The enzyme catalyses [DNA-directed RNA polymerase] + ATP = phospho-[DNA-directed RNA polymerase] + ADP + H(+). With respect to regulation, inhibited by RANBP9. Inhibited by harmine, leucettamine B and leucettine L41. Dual-specificity kinase which possesses both serine/threonine and tyrosine kinase activities. Exhibits a substrate preference for proline at position P+1 and arginine at position P-3. Plays an important role in double-strand breaks (DSBs) repair following DNA damage. Mechanistically, phosphorylates RNF169 and increases its ability to block accumulation of TP53BP1 at the DSB sites thereby promoting homologous recombination repair (HRR). Also acts as a positive regulator of transcription by acting as a CTD kinase that mediates phosphorylation of the CTD (C-terminal domain) of the large subunit of RNA polymerase II (RNAP II) POLR2A. May play a role in a signaling pathway regulating nuclear functions of cell proliferation. Modulates alternative splicing by phosphorylating the splice factor SRSF6. Has pro-survival function and negatively regulates the apoptotic process. Promotes cell survival upon genotoxic stress through phosphorylation of SIRT1. This in turn inhibits p53/TP53 activity and apoptosis. Phosphorylates SEPTIN4, SEPTIN5 and SF3B1 at 'Thr-434'. The sequence is that of Dual specificity tyrosine-phosphorylation-regulated kinase 1A from Homo sapiens (Human).